The primary structure comprises 479 residues: Aspartyl/glutamyl-tRNA(Asn/Gln) amidotransferase subunit B (479 aa).

This sequence belongs to the GatB/GatE family. GatB subfamily. Heterotrimer of A, B and C subunits.

The enzyme catalyses L-glutamyl-tRNA(Gln) + L-glutamine + ATP + H2O = L-glutaminyl-tRNA(Gln) + L-glutamate + ADP + phosphate + H(+). It carries out the reaction L-aspartyl-tRNA(Asn) + L-glutamine + ATP + H2O = L-asparaginyl-tRNA(Asn) + L-glutamate + ADP + phosphate + 2 H(+). Functionally, allows the formation of correctly charged Asn-tRNA(Asn) or Gln-tRNA(Gln) through the transamidation of misacylated Asp-tRNA(Asn) or Glu-tRNA(Gln) in organisms which lack either or both of asparaginyl-tRNA or glutaminyl-tRNA synthetases. The reaction takes place in the presence of glutamine and ATP through an activated phospho-Asp-tRNA(Asn) or phospho-Glu-tRNA(Gln). The polypeptide is Aspartyl/glutamyl-tRNA(Asn/Gln) amidotransferase subunit B (Streptococcus pyogenes serotype M3 (strain ATCC BAA-595 / MGAS315)).